Consider the following 162-residue polypeptide: 2-C-methyl-D-erythritol 2,4-cyclodiphosphate synthase (162 aa).

Aspartate 8 and histidine 10 together coordinate a divalent metal cation. Residues 8–10 and 36–37 contribute to the 4-CDP-2-C-methyl-D-erythritol 2-phosphate site; these read DVH and HS. Histidine 44 lines the a divalent metal cation pocket. 4-CDP-2-C-methyl-D-erythritol 2-phosphate is bound by residues 58–60, 63–67, 102–108, 134–137, phenylalanine 141, and arginine 144; these read DIG, FPDTD, AQAPKMA, and TTTE.

The protein belongs to the IspF family. As to quaternary structure, homotrimer. The cofactor is a divalent metal cation.

The catalysed reaction is 4-CDP-2-C-methyl-D-erythritol 2-phosphate = 2-C-methyl-D-erythritol 2,4-cyclic diphosphate + CMP. The protein operates within isoprenoid biosynthesis; isopentenyl diphosphate biosynthesis via DXP pathway; isopentenyl diphosphate from 1-deoxy-D-xylulose 5-phosphate: step 4/6. Involved in the biosynthesis of isopentenyl diphosphate (IPP) and dimethylallyl diphosphate (DMAPP), two major building blocks of isoprenoid compounds. Catalyzes the conversion of 4-diphosphocytidyl-2-C-methyl-D-erythritol 2-phosphate (CDP-ME2P) to 2-C-methyl-D-erythritol 2,4-cyclodiphosphate (ME-CPP) with a corresponding release of cytidine 5-monophosphate (CMP). The polypeptide is 2-C-methyl-D-erythritol 2,4-cyclodiphosphate synthase (Yersinia enterocolitica serotype O:8 / biotype 1B (strain NCTC 13174 / 8081)).